A 306-amino-acid polypeptide reads, in one-letter code: Porphobilinogen deaminase (306 aa).

S-(dipyrrolylmethanemethyl)cysteine is present on cysteine 244.

Belongs to the HMBS family. Monomer. It depends on dipyrromethane as a cofactor.

It carries out the reaction 4 porphobilinogen + H2O = hydroxymethylbilane + 4 NH4(+). It participates in porphyrin-containing compound metabolism; protoporphyrin-IX biosynthesis; coproporphyrinogen-III from 5-aminolevulinate: step 2/4. Functionally, tetrapolymerization of the monopyrrole PBG into the hydroxymethylbilane pre-uroporphyrinogen in several discrete steps. This chain is Porphobilinogen deaminase, found in Streptococcus sanguinis (strain SK36).